The following is a 416-amino-acid chain: Imidazolonepropionase (416 aa).

Fe(3+)-binding residues include histidine 82 and histidine 84. Positions 82 and 84 each coordinate Zn(2+). 4-imidazolone-5-propanoate contacts are provided by arginine 91, tyrosine 154, and histidine 187. Tyrosine 154 contacts N-formimidoyl-L-glutamate. Histidine 252 is a Fe(3+) binding site. Residue histidine 252 participates in Zn(2+) binding. Glutamate 255 lines the 4-imidazolone-5-propanoate pocket. Aspartate 326 serves as a coordination point for Fe(3+). Aspartate 326 provides a ligand contact to Zn(2+). The N-formimidoyl-L-glutamate site is built by asparagine 328 and glycine 330. Serine 331 contributes to the 4-imidazolone-5-propanoate binding site.

Belongs to the metallo-dependent hydrolases superfamily. HutI family. Zn(2+) is required as a cofactor. It depends on Fe(3+) as a cofactor.

The protein resides in the cytoplasm. The catalysed reaction is 4-imidazolone-5-propanoate + H2O = N-formimidoyl-L-glutamate. The protein operates within amino-acid degradation; L-histidine degradation into L-glutamate; N-formimidoyl-L-glutamate from L-histidine: step 3/3. Its function is as follows. Catalyzes the hydrolytic cleavage of the carbon-nitrogen bond in imidazolone-5-propanoate to yield N-formimidoyl-L-glutamate. It is the third step in the universal histidine degradation pathway. This Parabacteroides distasonis (strain ATCC 8503 / DSM 20701 / CIP 104284 / JCM 5825 / NCTC 11152) protein is Imidazolonepropionase.